Consider the following 665-residue polypeptide: tRNA 5-methylaminomethyl-2-thiouridine biosynthesis bifunctional protein MnmC (665 aa).

A tRNA (mnm(5)s(2)U34)-methyltransferase region spans residues 1 to 243 (MSQTSLHHAR…KWAMLAGERV (243 aa)). An FAD-dependent cmnm(5)s(2)U34 oxidoreductase region spans residues 268–665 (IGGGIASAMT…RKLLKGKPLN (398 aa)).

In the N-terminal section; belongs to the methyltransferase superfamily. tRNA (mnm(5)s(2)U34)-methyltransferase family. It in the C-terminal section; belongs to the DAO family. The cofactor is FAD.

The protein localises to the cytoplasm. The catalysed reaction is 5-aminomethyl-2-thiouridine(34) in tRNA + S-adenosyl-L-methionine = 5-methylaminomethyl-2-thiouridine(34) in tRNA + S-adenosyl-L-homocysteine + H(+). Its function is as follows. Catalyzes the last two steps in the biosynthesis of 5-methylaminomethyl-2-thiouridine (mnm(5)s(2)U) at the wobble position (U34) in tRNA. Catalyzes the FAD-dependent demodification of cmnm(5)s(2)U34 to nm(5)s(2)U34, followed by the transfer of a methyl group from S-adenosyl-L-methionine to nm(5)s(2)U34, to form mnm(5)s(2)U34. In Aeromonas salmonicida (strain A449), this protein is tRNA 5-methylaminomethyl-2-thiouridine biosynthesis bifunctional protein MnmC.